A 394-amino-acid polypeptide reads, in one-letter code: MGIKGLTGLLSQHAPKAIQEHEIKTLFGRKVAIDASMSIYQFLIAVRQKDGELLTNDAGETTSHLMGLFYRTLRIVENGIKPAYIFDGKPPELKKGVLSKRLERREEAKEEGEEAKETGTVEDVDRFSRRTVKVTREHNEECRRLLRLMGIPVVIAPSEAEAQCAELARGGKVYAAGSEDMDTLTFNAPILFRHLTFSEAKKQPISEINLKEALEGLDMNMSQFIDLCILLGCDYLEPIKGVGPKSALKLIREYGGLKGVVKHLRENSGCRGMQIPDEWPWEEAKKIFEKPDVLPADEVELEWTNPDVDGLVQFLVKEKGFNEDRVRKGAEKLQKFLNSKQQGRLDGFFSVKPKEKAAAPAPVGKAKGKGKVDAKAKGTKRKVGFLNSMSGPLA.

Residues 1–105 are N-domain; sequence MGIKGLTGLL…GVLSKRLERR (105 aa). Aspartate 34 provides a ligand contact to Mg(2+). 2 residues coordinate DNA: arginine 47 and arginine 71. Mg(2+)-binding residues include aspartate 87, glutamate 159, glutamate 161, aspartate 180, and aspartate 182. Residues 123-254 are I-domain; the sequence is DVDRFSRRTV…KSALKLIREY (132 aa). Glutamate 159 lines the DNA pocket. DNA-binding residues include glycine 232 and aspartate 234. A Mg(2+)-binding site is contributed by aspartate 234. The segment at 341–349 is interaction with PCNA; that stretch reads QQGRLDGFF. The disordered stretch occupies residues 356-375; sequence KAAAPAPVGKAKGKGKVDAK.

Belongs to the XPG/RAD2 endonuclease family. FEN1 subfamily. Interacts with PCNA. Three molecules of FEN1 bind to one PCNA trimer with each molecule binding to one PCNA monomer. PCNA stimulates the nuclease activity without altering cleavage specificity. The cofactor is Mg(2+). Phosphorylated. Phosphorylation upon DNA damage induces relocalization to the nuclear plasma.

The protein localises to the nucleus. It is found in the nucleolus. Its subcellular location is the nucleoplasm. The protein resides in the mitochondrion. Functionally, structure-specific nuclease with 5'-flap endonuclease and 5'-3' exonuclease activities involved in DNA replication and repair. During DNA replication, cleaves the 5'-overhanging flap structure that is generated by displacement synthesis when DNA polymerase encounters the 5'-end of a downstream Okazaki fragment. It enters the flap from the 5'-end and then tracks to cleave the flap base, leaving a nick for ligation. Also involved in the long patch base excision repair (LP-BER) pathway, by cleaving within the apurinic/apyrimidinic (AP) site-terminated flap. Acts as a genome stabilization factor that prevents flaps from equilibrating into structures that lead to duplications and deletions. Also possesses 5'-3' exonuclease activity on nicked or gapped double-stranded DNA, and exhibits RNase H activity. Also involved in replication and repair of rDNA and in repairing mitochondrial DNA. The polypeptide is Flap endonuclease 1-A (Laccaria bicolor (strain S238N-H82 / ATCC MYA-4686) (Bicoloured deceiver)).